Here is a 233-residue protein sequence, read N- to C-terminus: Probable transglycosylase IsaA (233 aa).

The signal sequence occupies residues 1 to 29; the sequence is MKKTIMASSLAVALGVTGYAAGTGHQAHA.

The protein belongs to the transglycosylase family. IsaA subfamily.

Its subcellular location is the secreted. Is able to cleave peptidoglycan. In Staphylococcus aureus (strain Mu3 / ATCC 700698), this protein is Probable transglycosylase IsaA (isaA).